We begin with the raw amino-acid sequence, 192 residues long: Phosphoheptose isomerase (192 aa).

Residues 35–192 form the SIS domain; the sequence is LIETLENQGK…CIERHFAHKN (158 aa). Position 50–52 (50–52) interacts with substrate; it reads NGG. Positions 59 and 63 each coordinate Zn(2+). Substrate is bound by residues glutamate 63, 92-93, 118-120, serine 123, and glutamine 170; these read ND and STS. Zn(2+) contacts are provided by glutamine 170 and histidine 178.

It belongs to the SIS family. GmhA subfamily. Homotetramer. Zn(2+) serves as cofactor.

The protein resides in the cytoplasm. It carries out the reaction 2 D-sedoheptulose 7-phosphate = D-glycero-alpha-D-manno-heptose 7-phosphate + D-glycero-beta-D-manno-heptose 7-phosphate. It participates in carbohydrate biosynthesis; D-glycero-D-manno-heptose 7-phosphate biosynthesis; D-glycero-alpha-D-manno-heptose 7-phosphate and D-glycero-beta-D-manno-heptose 7-phosphate from sedoheptulose 7-phosphate: step 1/1. Functionally, catalyzes the isomerization of sedoheptulose 7-phosphate in D-glycero-D-manno-heptose 7-phosphate. This is Phosphoheptose isomerase from Helicobacter pylori (strain HPAG1).